Here is a 331-residue protein sequence, read N- to C-terminus: NmrA-like family domain-containing oxidoreductase himF (331 aa).

NADP(+) is bound by residues 8-13, 34-38, 55-56, 76-78, lysine 133, and 155-167; these read GATGNQ, RNAES, DG, TNG, and WFFE…QMAA.

It belongs to the NmrA-type oxidoreductase family.

The protein operates within secondary metabolite biosynthesis. Its function is as follows. NmrA-like family domain-containing oxidoreductase; part of the him gene cluster that mediates the biosynthesis of himeic acid A, a ubiquitin-activating enzyme (E1) inhibitor. First, himA, together with the trans-enoyl reductase himH, catalyzes the formation of apolyketide chain, which is then condensed with leucine by the NRPS activity of himA. Dieckmann cyclization and release from himA gives a tetramic acid intermediate as the product of himA PKS-NRPS. HimG then catalyzes alpha-oxidation of the tetramic acid ring, with a subsequent rearrangement to yield apyrone intermediate. Two terminal methyl groups of polyketide and amide side chains are oxidized to carboxylic acids by himC cytochrome P450 monooxygenase to form himeic acid A. Himeic acid A is further converted to himeic acid B and C during culture growth. No gene responsible for pyrone to pyridone conversion was found in the him gene cluster and himeic acid A is non-enzymatically converted to himeic acid C by the incorporation of an ammonium nitrogen atom in a pH5 buffer, and to himeic acid B at a conversion ratio of 50% during incubation in MeOH for 5 days. The sequence is that of NmrA-like family domain-containing oxidoreductase himF from Aspergillus japonicus.